Here is a 208-residue protein sequence, read N- to C-terminus: MSETAPAASSTLVPAPVEKPATKRRGKKPGMATARKPRGFSVSKLIPEALSMSQERAGMSLAALKKALAAAGYDVEKNNSRIKLALKRLVNKGVLVQTKGTGASGSFKLSKKAASGNDKGKGKKSASAKAKKLGLSRASRSPKSSKTKVVKKPKATPTKGSGSRRKTKGAKGLQQRKSPAKARATNSNSGKSKMVMQKTDLRKAAGRK.

Residues 1–12 (MSETAPAASSTL) show a composition bias toward polar residues. Residues 1–39 (MSETAPAASSTLVPAPVEKPATKRRGKKPGMATARKPRG) are disordered. The residue at position 9 (Ser-9) is a Phosphoserine. Residues 38 to 111 (RGFSVSKLIP…GASGSFKLSK (74 aa)) form the H15 domain. Citrulline is present on Arg-56. The tract at residues 93-208 (GVLVQTKGTG…TDLRKAAGRK (116 aa)) is disordered. Positions 121 to 134 (KGKKSASAKAKKLG) are enriched in basic residues. Ser-141 carries the post-translational modification Phosphoserine. A compositionally biased stretch (basic residues) spans 143–154 (KSSKTKVVKKPK). Thr-156 is subject to Phosphothreonine. 3 positions are modified to phosphoserine: Ser-163, Ser-178, and Ser-187. Over residues 199-208 (TDLRKAAGRK) the composition is skewed to basic and acidic residues.

Belongs to the histone H1/H5 family. Post-translationally, phosphorylated in early spermatids. Citrullination at Arg-56 (H1R54ci) by PADI4 takes place within the DNA-binding site of H1 and results in its displacement from chromatin and global chromatin decondensation, thereby promoting pluripotency and stem cell maintenance. In terms of tissue distribution, testis-specific. Expressed in pachytene spermatocytes during meiotic prophase I.

The protein localises to the nucleus. It localises to the chromosome. Testis-specific histone H1 that forms less compacted chromatin compared to other H1 histone subtypes. Formation of more relaxed chromatin may be required to promote chromatin architecture required for proper chromosome regulation during meiosis, such as homologous recombination. Histones H1 act as linkers that bind to nucleosomes and compact polynucleosomes into a higher-order chromatin configuration. The chain is Histone H1t from Rattus norvegicus (Rat).